A 616-amino-acid chain; its full sequence is DNA-binding protein RFX5 (616 aa).

Positions 1 to 29 (MAEDEPDAKSPKTGGRAPPGGAEAGEPTT) are disordered. An N-acetylalanine modification is found at Ala2. Ser10 carries the post-translational modification Phosphoserine. Over residues 13–29 (TGGRAPPGGAEAGEPTT) the composition is skewed to low complexity. The interval 25–90 (GEPTTLLQRL…PSTLSNEEYM (66 aa)) is N-terminal domain. A leucine-rich region; critical for dimer formation and for interaction with RFXAP region spans residues 62 to 66 (LYLYL). The segment at residues 92–168 (AYRWIRNHLE…YCYSGIRRKT (77 aa)) is a DNA-binding region (RFX-type winged-helix). A PxLPxI/L motif; mediates interaction with RFXANK motif is present at residues 173–178 (PPLPGL). Ser185 bears the Phosphoserine mark. Disordered regions lie at residues 252–314 (AEED…ESSA) and 391–616 (LPGP…ATPP). Residues 276–293 (GAHKKPERLAQPPKDLEA) are compositionally biased toward basic and acidic residues. Pro residues predominate over residues 391–401 (LPGPGPGPGRA). Residues 424–434 (GPHDKGVKRTA) are compositionally biased toward basic and acidic residues. Positions 463-473 (KRKRGRPRKKS) are enriched in basic residues. A compositionally biased stretch (gly residues) spans 534-546 (QGDGTVSKGGRGP). Positions 606-616 (QEHKDPKATPP) are enriched in basic and acidic residues.

This sequence belongs to the RFX family. Homodimer. The RFX heterotetrameric complex consists of 2 molecules of RFX5 and one each of RFXAP and RFX-B/RFXANK; with each subunit representing a separate complementation group. Interacts (via PxLPxI/L motif) with RFXANK (via ankyrin repeats); the interaction is direct. RFX forms cooperative DNA binding complexes with X2BP and CBF/NF-Y. RFX associates with CIITA to form an active transcriptional complex. In terms of processing, phosphorylated. As to expression, ubiquitous.

It localises to the nucleus. In terms of biological role, activates transcription from class II MHC promoters. Recognizes X-boxes. Mediates cooperative binding between RFX and NF-Y. RFX binds the X1 box of MHC-II promoters. The polypeptide is DNA-binding protein RFX5 (RFX5) (Homo sapiens (Human)).